Reading from the N-terminus, the 459-residue chain is tRNA-guanine(15) transglycosylase (459 aa).

The Nucleophile role is filled by D90. Substrate-binding residues include D125 and G192. Zn(2+) is bound by residues C275, C277, and C280.

Belongs to the archaeosine tRNA-ribosyltransferase family. It depends on Zn(2+) as a cofactor.

It carries out the reaction guanosine(15) in tRNA + 7-cyano-7-deazaguanine = 7-cyano-7-carbaguanosine(15) in tRNA + guanine. It participates in tRNA modification; archaeosine-tRNA biosynthesis. In terms of biological role, exchanges the guanine residue with 7-cyano-7-deazaguanine (preQ0) at position 15 in the dihydrouridine loop (D-loop) of archaeal tRNAs. The polypeptide is tRNA-guanine(15) transglycosylase (Methanopyrus kandleri (strain AV19 / DSM 6324 / JCM 9639 / NBRC 100938)).